A 397-amino-acid chain; its full sequence is 8-amino-7-oxononanoate synthase (397 aa).

Arginine 21 is a binding site for substrate. 110–111 (GY) is a pyridoxal 5'-phosphate binding site. A substrate-binding site is contributed by histidine 135. The pyridoxal 5'-phosphate site is built by serine 181, histidine 209, and threonine 238. At lysine 241 the chain carries N6-(pyridoxal phosphate)lysine. Threonine 355 lines the substrate pocket.

The protein belongs to the class-II pyridoxal-phosphate-dependent aminotransferase family. BioF subfamily. As to quaternary structure, homodimer. It depends on pyridoxal 5'-phosphate as a cofactor.

The enzyme catalyses 6-carboxyhexanoyl-[ACP] + L-alanine + H(+) = (8S)-8-amino-7-oxononanoate + holo-[ACP] + CO2. It participates in cofactor biosynthesis; biotin biosynthesis. Catalyzes the decarboxylative condensation of pimeloyl-[acyl-carrier protein] and L-alanine to produce 8-amino-7-oxononanoate (AON), [acyl-carrier protein], and carbon dioxide. The protein is 8-amino-7-oxononanoate synthase of Saccharophagus degradans (strain 2-40 / ATCC 43961 / DSM 17024).